Here is a 302-residue protein sequence, read N- to C-terminus: Nucleotide-binding protein STH186 (302 aa).

15-22 lines the ATP pocket; sequence GMSGAGKT. 66-69 contributes to the GTP binding site; the sequence is DIRG.

Belongs to the RapZ-like family.

Displays ATPase and GTPase activities. This chain is Nucleotide-binding protein STH186, found in Symbiobacterium thermophilum (strain DSM 24528 / JCM 14929 / IAM 14863 / T).